The chain runs to 273 residues: Glutamate 5-kinase (273 aa).

K15 serves as a coordination point for ATP. Substrate is bound by residues S55, D142, and N158. ATP contacts are provided by residues 178–179 and 220–226; these read SD and TGGMLSK.

The protein belongs to the glutamate 5-kinase family.

It is found in the cytoplasm. It catalyses the reaction L-glutamate + ATP = L-glutamyl 5-phosphate + ADP. It functions in the pathway amino-acid biosynthesis; L-proline biosynthesis; L-glutamate 5-semialdehyde from L-glutamate: step 1/2. In terms of biological role, catalyzes the transfer of a phosphate group to glutamate to form L-glutamate 5-phosphate. The protein is Glutamate 5-kinase of Streptococcus pyogenes serotype M2 (strain MGAS10270).